We begin with the raw amino-acid sequence, 3419 residues long: Genome polyprotein (3419 aa).

The tract at residues 1–25 (MKNPKEEIRRIRIVNMLKRGVARVN) is disordered. Residues 1-104 (MKNPKEEIRR…INARKERKRR (104 aa)) are Cytoplasmic-facing. The segment at 37–72 (LLLGHGPIRMVLAILAFLRFTAIKPSLGLINRWGSV) is hydrophobic; homodimerization of capsid protein C. A propeptide spans 105–122 (GADTSIGIIGLLLTTAMA) (ER anchor for capsid protein C, removed in mature form by serine protease NS3). The chain crosses the membrane as a helical span at residues 105-125 (GADTSIGIIGLLLTTAMAAEI). At 126 to 249 (TRRGSAYYMY…YTKHLIKVEN (124 aa)) the chain is on the extracellular side. Asn192 is a glycosylation site (N-linked (GlcNAc...) asparagine; by host). Residues 250–269 (WIFRNPGFALVAVAIAWLLG) form a helical membrane-spanning segment. Residues 270–274 (SSTSQ) lie on the Cytoplasmic side of the membrane. The chain crosses the membrane as a helical span at residues 275-290 (KVIYLVMILLIAPAYS). The Extracellular segment spans residues 291–741 (IRCIGVSNRD…HQIFGAAFKS (451 aa)). Cys293 and Cys320 are joined by a disulfide. Lys328 participates in a covalent cross-link: Glycyl lysine isopeptide (Lys-Gly) (interchain with G-Cter in ubiquitin). Intrachain disulfides connect Cys350–Cys406, Cys350–Cys411, Cys364–Cys395, Cys382–Cys406, Cys382–Cys411, Cys476–Cys577, and Cys594–Cys625. Residues 388-401 (DRGWGNGCGLFGKG) form a fusion peptide region. Residue Lys567 forms a Glycyl lysine isopeptide (Lys-Gly) (interchain with G-Cter in ubiquitin) linkage. Residues 742–763 (LFGGMSWFSQILIGTLLVWLGL) traverse the membrane as a helical segment. Residues 764–769 (NTKNGS) are Cytoplasmic-facing. A helical transmembrane segment spans residues 770–790 (ISLTCLALGGVMIFLSTAVSA). The Lumenal portion of the chain corresponds to 791 to 1173 (DVGCSVDFSK…EGLKKRMTTK (383 aa)). 6 disulfides stabilise this stretch: Cys794–Cys805, Cys845–Cys933, Cys969–Cys1013, Cys1070–Cys1119, Cys1081–Cys1102, and Cys1103–Cys1106. N-linked (GlcNAc...) asparagine; by host glycosylation is found at Asn920 and Asn997. A helical membrane pass occupies residues 1174–1194 (IIMSTSMAVLVVMILGGFSMS). Topologically, residues 1195–1216 (DLAKLVILMGATFAEMNTGGDV) are cytoplasmic. A helical transmembrane segment spans residues 1217–1237 (AHLALVAAFKVRPALLVSFIF). Topologically, residues 1238–1266 (RANWTPRESMLLALASCLLQTAISALEGD) are lumenal. Residues 1267-1287 (LMVLINGFALAWLAIRAMAVP) traverse the membrane as a helical segment. The Cytoplasmic portion of the chain corresponds to 1288–1291 (RTDN). The chain crosses the membrane as a helical span at residues 1292-1312 (IALPILAALTPLARGTLLVAW). At 1313 to 1341 (RAGLATCGGIMLLSLKGKGSVKKNLPFVM) the chain is on the lumenal side. The chain crosses the membrane as a helical span at residues 1342–1362 (ALGLTAVRVVDPINVVGLLLL). At 1363–1369 (TRSGKRS) the chain is on the cytoplasmic side. The helical transmembrane segment at 1370 to 1390 (WPPSEVLTAVGLICALAGGFA) threads the bilayer. Residues 1391–1393 (KAD) lie on the Lumenal side of the membrane. The helical transmembrane segment at 1394 to 1414 (IEMAGPMAAVGLLIVSYVVSG) threads the bilayer. The Cytoplasmic segment spans residues 1415–1468 (KSVDMYIERAGDITWEKDAEVTGNSPRLDVALDESGDFSLVEEDGPPMREIILK). The interval 1421 to 1460 (IERAGDITWEKDAEVTGNSPRLDVALDESGDFSLVEEDGP) is interacts with and activates NS3 protease. Residues 1425–1447 (GDITWEKDAEVTGNSPRLDVALD) are disordered. The segment at residues 1469–1489 (VVLMAICGMNPIAIPFAAGAW) is an intramembrane region (helical). The Lumenal portion of the chain corresponds to 1490–2166 (YVYVKTGKRS…KAAAAQLPET (677 aa)). In terms of domain architecture, Peptidase S7 spans 1499 to 1676 (SGALWDVPAP…KREEETPVEC (178 aa)). Residues His1549, Asp1573, and Ser1633 each act as charge relay system; for serine protease NS3 activity in the active site. The 157-residue stretch at 1679 to 1835 (PSMLKKKQLT…DSNSPIMDTE (157 aa)) folds into the Helicase ATP-binding domain. Residues 1683–1686 (KKKQ) form an important for RNA-binding region. 1692-1699 (LHPGAGKT) lines the ATP pocket. The DEAH box signature appears at 1783 to 1786 (DEAH). The Helicase C-terminal domain maps to 1830 to 2009 (PIMDTEVEVP…GLIASLYRPE (180 aa)). Lys1887 carries the post-translational modification N6-acetyllysine; by host. The helical transmembrane segment at 2167–2187 (LETIMLLGLLGTVSLGIFFVL) threads the bilayer. Residues 2188 to 2191 (MRNK) are Lumenal-facing. Residues 2192–2212 (GIGKMGFGMVTLGASAWLMWL) constitute an intramembrane region (helical). Topologically, residues 2213–2214 (SE) are cytoplasmic. The helical transmembrane segment at 2215–2235 (IEPARIACVLIVVFLLLVVLI) threads the bilayer. The Lumenal segment spans residues 2236-2250 (PEPEKQRSPQDNQMA). Residues 2251-2265 (IIIMVAVGLLGLITA) constitute an intramembrane region (helical). Over 2266-2303 (NELGWLERTKNDIAHLMGRREEGATMGFSMDIDLRPAS) the chain is Lumenal. The helical intramembrane region spans 2304–2324 (AWAIYAALTTLITPAVQHAVT). Residues 2325 to 2340 (TSYNNYSLMAMATQAG) are Lumenal-facing. A helical transmembrane segment spans residues 2341-2361 (VLFGMGKGMPFMHGDLGVPLL). At 2362–2371 (MMGCYSQLTP) the chain is on the cytoplasmic side. A helical transmembrane segment spans residues 2372 to 2392 (LTLIVAIILLVAHYMYLIPGL). The Lumenal segment spans residues 2393–2437 (QAAAARAAQKRTAAGIMKNPVVDGIVVTDIDTMTIDPQVEKKMGQ). A helical membrane pass occupies residues 2438 to 2458 (VLLIAVAISSAVLLRTAWGWG). The Cytoplasmic portion of the chain corresponds to 2459–3419 (EAGALITAAT…GEEGSTPGVL (961 aa)). Residues 2517-2781 (GGGTGETLGE…DVNLGSGTRA (265 aa)) enclose the mRNA cap 0-1 NS5-type MT domain. 6 residues coordinate mRNA: Lys2529, Leu2532, Asn2533, Met2535, Phe2540, and Lys2544. 2529 to 2535 (KARLNQM) contributes to the GTP binding site. An S-adenosyl-L-methionine-binding site is contributed by Ser2572. Residue Ser2572 is modified to Phosphoserine. The active-site For 2'-O-MTase activity is the Lys2577. The segment at 2593-2596 (VVDL) is SUMO-interacting motif (SIM). 10 residues coordinate S-adenosyl-L-methionine: Gly2602, Trp2603, Thr2620, Lys2621, His2626, Glu2627, Asp2647, Val2648, Asp2662, and Ile2663. Asp2662 functions as the For 2'-O-MTase activity in the catalytic mechanism. Residue 2665–2671 (ESSSSPE) participates in GTP binding. Ser2666 contributes to the mRNA binding site. Lys2698 functions as the For 2'-O-MTase activity in the catalytic mechanism. MRNA is bound by residues Arg2729 and Ser2731. 2729–2731 (RNS) lines the GTP pocket. Glu2734 serves as the catalytic For 2'-O-MTase activity. Tyr2736 lines the S-adenosyl-L-methionine pocket. Residues 2904 to 2910 (KRKRPRV) carry the Nuclear localization signal (NLS) motif. Zn(2+) contacts are provided by Glu2955, His2959, Cys2964, and Cys2967. Residues 3045–3195 (GKMYADDTAG…KPIDDRFAHA (151 aa)) enclose the RdRp catalytic domain. Residues His3230, Cys3246, and Cys3365 each contribute to the Zn(2+) site.

This sequence in the N-terminal section; belongs to the class I-like SAM-binding methyltransferase superfamily. mRNA cap 0-1 NS5-type methyltransferase family. As to quaternary structure, homodimer. Interacts with host SERTAD3; this interaction promotes capsid protein C degradation. Interacts with host CAPRIN1; this interaction is probably linked to the inhibition of stress granules formation by the virus. Interacts with host G3BP1; this interaction is probably linked to the inhibition of stress granules formation by the virus. Forms heterodimers with envelope protein E in the endoplasmic reticulum and Golgi. Interacts with non-structural protein 2A. In terms of assembly, homodimer; in the endoplasmic reticulum and Golgi. Interacts with host TYRO3, AXL and DC-SIGN proteins. Interacts with non-structural protein 2A. Interacts with host HAVCR1; this interaction likely mediates virus attachment to host cell. Interacts with host NCAM1. Interacts with host HSPA5. Interacts with Aedes aegypti SRPN25, APY and venom allergen-1 salivary proteins; the interactions do not affect Zika virus replication in human endothelial cells and keratinocytes. As to quaternary structure, homodimer; Homohexamer when secreted. Interacts with host TBK1. Interacts with host USP8. Interacts with envelope protein E. Interacts with host HSPA5. Interacts with the structural protein prM/E complex, and the NS2B/NS3 protease complex. In terms of assembly, forms a heterodimer with serine protease NS3. May form homooligomers. Interacts with human SPCS1. Interacts with non-structural protein 2A. As to quaternary structure, forms a heterodimer with NS2B. Interacts with NS4B. Interacts with unphosphorylated RNA-directed RNA polymerase NS5; this interaction stimulates RNA-directed RNA polymerase NS5 guanylyltransferase activity. Interacts with non-structural protein 2A. Interacts with host SHFL; this interaction promotes NS3 degradation via a lysosome-dependent pathway. Interacts with host CEP63; this interaction disorganizes the centrosome and inhibits host innate immune response. May interact with host ANKLE2; the interaction may cause defects in brain development, such as microcephaly. May interact with host SRPRA and SEC61G. In terms of assembly, interacts with serine protease NS3. Interacts with NS1. Interacts with host TBK1. As to quaternary structure, homodimer. Interacts with host STAT2; this interaction inhibits the phosphorylation of the latter, and, when all viral proteins are present (polyprotein), targets STAT2 for degradation. Interacts with host TBK1 and IKBKE; these interactions lead to the inhibition of the host RIG-I signaling pathway. Interacts with host KPNA2. Interacts with host PAF1 complex; the interaction may prevent the recruitment of the host PAF1 complex to interferon-responsive genes, and thus reduces the immune response. Interacts with serine protease NS3. Interacts with host ZSWIM8; this interaction allows STAT2 binding to ZSWIM8 and subsequent proteasomal degradation leading to inhibition of interferon signaling. Post-translationally, specific enzymatic cleavages in vivo yield mature proteins. Cleavages in the lumen of endoplasmic reticulum are performed by host signal peptidase, whereas cleavages in the cytoplasmic side are performed by serine protease NS3. Signal cleavage at the 2K-4B site requires a prior NS3 protease-mediated cleavage at the 4A-2K site. In terms of processing, cleaved in post-Golgi vesicles by a host furin, releasing the mature small envelope protein M, and peptide pr. This cleavage is incomplete as up to 30% of viral particles still carry uncleaved prM. N-glycosylation plays a role in virulence in mammalian and mosquito hosts, but may have no effect on neurovirulence. Post-translationally, ubiquitination by host TRIM7 promotes virus attachment and fusion of the virus and the host endosome membrane. In terms of processing, N-glycosylated. The excreted form is glycosylated, which is required for efficient secretion of the protein from infected cells. Acetylated by host KAT5. Acetylation modulates NS3 RNA-binding and unwinding activities and plays an important positive role for viral replication. Post-translationally, phosphorylated on serines residues. This phosphorylation may trigger NS5 nuclear localization. In terms of processing, sumoylated, required for regulating IFN induced interferon stimulated genes/ISGs.

The protein resides in the virion. It localises to the host nucleus. It is found in the host cytoplasm. Its subcellular location is the host perinuclear region. The protein localises to the secreted. The protein resides in the virion membrane. It localises to the host endoplasmic reticulum membrane. It catalyses the reaction Selective hydrolysis of -Xaa-Xaa-|-Yaa- bonds in which each of the Xaa can be either Arg or Lys and Yaa can be either Ser or Ala.. The catalysed reaction is RNA(n) + a ribonucleoside 5'-triphosphate = RNA(n+1) + diphosphate. The enzyme catalyses a ribonucleoside 5'-triphosphate + H2O = a ribonucleoside 5'-diphosphate + phosphate + H(+). It carries out the reaction ATP + H2O = ADP + phosphate + H(+). It catalyses the reaction a 5'-end (5'-triphosphoguanosine)-ribonucleoside in mRNA + S-adenosyl-L-methionine = a 5'-end (N(7)-methyl 5'-triphosphoguanosine)-ribonucleoside in mRNA + S-adenosyl-L-homocysteine. The catalysed reaction is a 5'-end (N(7)-methyl 5'-triphosphoguanosine)-ribonucleoside in mRNA + S-adenosyl-L-methionine = a 5'-end (N(7)-methyl 5'-triphosphoguanosine)-(2'-O-methyl-ribonucleoside) in mRNA + S-adenosyl-L-homocysteine + H(+). Plays a role in virus budding by binding to the host cell membrane and packages the viral RNA into a nucleocapsid that forms the core of the mature virus particle. During virus entry, may induce genome penetration into the host cytoplasm after hemifusion induced by the surface proteins. Can migrate to the cell nucleus where it modulates host functions. Inhibits the integrated stress response (ISR) in the infected cell. Its function is as follows. Inhibits RNA silencing by interfering with host Dicer. Functionally, prevents premature fusion activity of envelope proteins in trans-Golgi by binding to envelope protein E at pH 6.0. After virion release in extracellular space, gets dissociated from E dimers. In terms of biological role, plays a role in host immune defense modulation and protection of envelope protein E during virion synthesis. PrM-E cleavage is inefficient, many virions are only partially matured and immature prM-E proteins could play a role in immune evasion. Contributes to fetal microcephaly in humans. Acts as a chaperone for envelope protein E during intracellular virion assembly by masking and inactivating envelope protein E fusion peptide. prM is the only viral peptide matured by host furin in the trans-Golgi network probably to avoid catastrophic activation of the viral fusion activity in acidic Golgi compartment prior to virion release. May play a role in virus budding. Exerts cytotoxic effects by activating a mitochondrial apoptotic pathway through M ectodomain. May display a viroporin activity. Its function is as follows. Binds to host cell surface receptors and mediates fusion between viral and cellular membranes. Efficient virus attachment to cell is, at least in part, mediated by host HAVCR1 in a cell-type specific manner. In addition, host NCAM1 can also be used as entry receptor. Interaction with host HSPA5 plays an important role in the early stages of infection as well. Envelope protein is synthesized in the endoplasmic reticulum and forms a heterodimer with protein prM. The heterodimer plays a role in virion budding in the ER, and the newly formed immature particle is covered with 60 spikes composed of heterodimers between precursor prM and envelope protein E. The virion is transported to the Golgi apparatus where the low pH causes the dissociation of PrM-E heterodimers and formation of E homodimers. PrM-E cleavage is inefficient, many virions are only partially matured and immature prM-E proteins could play a role in immune evasion. Functionally, plays a role in the inhibition of host RLR-induced interferon-beta activation by targeting TANK-binding kinase 1/TBK1. In addition, recruits the host deubiquitinase USP8 to cleave 'Lys-11'-linked polyubiquitin chains from caspase-1/CASP1 thus inhibiting its proteasomal degradation. In turn, stabilized CASP1 promotes cleavage of cGAS, which inhibits its ability to recognize mitochondrial DNA release and initiate type I interferon signaling. In terms of biological role, component of the viral RNA replication complex that recruits genomic RNA, the structural protein prM/E complex, and the NS2B/NS3 protease complex to the virion assembly site and orchestrates virus morphogenesis. Antagonizes also the host MDA5-mediated induction of alpha/beta interferon antiviral response. May disrupt adherens junction formation and thereby impair proliferation of radial cells in the host cortex. Required cofactor for the serine protease function of NS3. Its function is as follows. Displays three enzymatic activities: serine protease, NTPase and RNA helicase. NS3 serine protease, in association with NS2B, performs its autocleavage and cleaves the polyprotein at dibasic sites in the cytoplasm: C-prM, NS2A-NS2B, NS2B-NS3, NS3-NS4A, NS4A-2K and NS4B-NS5. NS3 RNA helicase binds RNA and unwinds dsRNA in the 3' to 5' direction. Leads to translation arrest when expressed ex vivo. Disrupts host centrosome organization in a CEP63-dependent manner to degrade host TBK1 and inhibits innate immune response. Inhibits the integrated stress response (ISR) in the infected cell. Functionally, regulates the ATPase activity of the NS3 helicase activity. NS4A allows NS3 helicase to conserve energy during unwinding. Cooperatively with NS4B suppresses the Akt-mTOR pathway and leads to cellular dysregulation. By inhibiting host ANKLE2 functions, may cause defects in brain development, such as microcephaly. Also antagonizes the host MDA5-mediated induction of alpha/beta interferon antiviral response. Inhibits the integrated stress response (ISR) in the infected cell. In terms of biological role, functions as a signal peptide for NS4B and is required for the interferon antagonism activity of the latter. Induces the formation of ER-derived membrane vesicles where the viral replication takes place. Also plays a role in the inhibition of host RLR-induced interferon-beta production at TANK-binding kinase 1/TBK1 level. Cooperatively with NS4A suppresses the Akt-mTOR pathway and leads to cellular dysregulation. Its function is as follows. Replicates the viral (+) and (-) RNA genome, and performs the capping of genomes in the cytoplasm. Methylates viral RNA cap at guanine N-7 and ribose 2'-O positions. Once sufficient NS5 is expressed, binds to the cap-proximal structure and inhibits further translation of the viral genome. Besides its role in RNA genome replication, also prevents the establishment of a cellular antiviral state by blocking the interferon-alpha/beta (IFN-alpha/beta) signaling pathway. Mechanistically, interferes with host kinases TBK1 and IKKE upstream of interferon regulatory factor 3/IRF3 to inhibit the RIG-I pathway. Also antagonizes type I interferon signaling by targeting STAT2 for degradation by the proteasome thereby preventing activation of JAK-STAT signaling pathway. Mechanistically, acts as a scaffold protein to connect host ZSWIM8/CUL3 ligase complex and STAT2, leading to STAT2 degradation. Within the host nucleus, disrupts host SUMO1 and STAT2 co-localization with PML, resulting in PML degradation. May also reduce immune responses by preventing the recruitment of the host PAF1 complex to interferon-responsive genes. The sequence is that of Genome polyprotein from Aedes aegypti (Yellowfever mosquito).